The sequence spans 343 residues: 3-dehydroquinate synthase (343 aa).

Residues 61–66, 95–99, 119–120, Lys132, Lys141, and 159–162 contribute to the NAD(+) site; these read SGEKYK, GVISD, TT, and FLKT. 3 residues coordinate Zn(2+): Glu174, His231, and His248.

This sequence belongs to the sugar phosphate cyclases superfamily. Dehydroquinate synthase family. It depends on NAD(+) as a cofactor. The cofactor is Co(2+). Zn(2+) is required as a cofactor.

Its subcellular location is the cytoplasm. The enzyme catalyses 7-phospho-2-dehydro-3-deoxy-D-arabino-heptonate = 3-dehydroquinate + phosphate. It functions in the pathway metabolic intermediate biosynthesis; chorismate biosynthesis; chorismate from D-erythrose 4-phosphate and phosphoenolpyruvate: step 2/7. Its function is as follows. Catalyzes the conversion of 3-deoxy-D-arabino-heptulosonate 7-phosphate (DAHP) to dehydroquinate (DHQ). The sequence is that of 3-dehydroquinate synthase from Helicobacter pylori (strain J99 / ATCC 700824) (Campylobacter pylori J99).